We begin with the raw amino-acid sequence, 406 residues long: Dual-specificity RNA methyltransferase RlmN (406 aa).

Glutamate 119 functions as the Proton acceptor in the catalytic mechanism. Residues 125–370 (DKGRGTLCVS…AMVRRTRGDD (246 aa)) enclose the Radical SAM core domain. The cysteines at positions 132 and 375 are disulfide-linked. Positions 139, 143, and 146 each coordinate [4Fe-4S] cluster. Residues 192–193 (GE), serine 224, 246–248 (SLH), and asparagine 332 contribute to the S-adenosyl-L-methionine site. Catalysis depends on cysteine 375, which acts as the S-methylcysteine intermediate.

Belongs to the radical SAM superfamily. RlmN family. The cofactor is [4Fe-4S] cluster.

The protein localises to the cytoplasm. The catalysed reaction is adenosine(2503) in 23S rRNA + 2 reduced [2Fe-2S]-[ferredoxin] + 2 S-adenosyl-L-methionine = 2-methyladenosine(2503) in 23S rRNA + 5'-deoxyadenosine + L-methionine + 2 oxidized [2Fe-2S]-[ferredoxin] + S-adenosyl-L-homocysteine. It carries out the reaction adenosine(37) in tRNA + 2 reduced [2Fe-2S]-[ferredoxin] + 2 S-adenosyl-L-methionine = 2-methyladenosine(37) in tRNA + 5'-deoxyadenosine + L-methionine + 2 oxidized [2Fe-2S]-[ferredoxin] + S-adenosyl-L-homocysteine. Specifically methylates position 2 of adenine 2503 in 23S rRNA and position 2 of adenine 37 in tRNAs. m2A2503 modification seems to play a crucial role in the proofreading step occurring at the peptidyl transferase center and thus would serve to optimize ribosomal fidelity. The polypeptide is Dual-specificity RNA methyltransferase RlmN (Xylella fastidiosa (strain M12)).